We begin with the raw amino-acid sequence, 1088 residues long: RNA-directed RNA polymerase (1088 aa).

One can recognise a RdRp catalytic domain in the interval 501 to 687; sequence LSYGDVTRFL…AKRYIAGGKI (187 aa).

Belongs to the reoviridae RNA-directed RNA polymerase family. Interacts with VP3 (Potential). Interacts with VP2; this interaction activates VP1. Interacts with NSP5; this interaction is probably necessary for the formation of functional virus factories. Interacts with NSP2; this interaction is weak. Requires Mg(2+) as cofactor.

The protein localises to the virion. The catalysed reaction is RNA(n) + a ribonucleoside 5'-triphosphate = RNA(n+1) + diphosphate. Functionally, RNA-directed RNA polymerase that is involved in both transcription and genome replication. Together with VP3 capping enzyme, forms an enzyme complex positioned near the channels situated at each of the five-fold vertices of the core. Following infection, the outermost layer of the virus is lost, leaving a double-layered particle (DLP) made up of the core and VP6 shell. VP1 then catalyzes the transcription of fully conservative plus-strand genomic RNAs that are extruded through the DLP's channels into the cytoplasm where they function as mRNAs for translation of viral proteins. One copy of each of the viral (+)RNAs is also recruited during core assembly, together with newly synthesized polymerase complexes and VP2. The polymerase of these novo-formed particles catalyzes the synthesis of complementary minus-strands leading to dsRNA formation. To do so, the polymerase specifically recognizes and binds 4 bases 5'-UGUG-3' in the conserved 3'-sequence of plus-strand RNA templates. VP2 presumably activates the autoinhibited VP1-RNA complex to coordinate packaging and genome replication. Once dsRNA synthesis is complete, the polymerase switches to the transcriptional mode, thus providing secondary transcription. In Homo sapiens (Human), this protein is RNA-directed RNA polymerase.